The sequence spans 576 residues: Interleukin-1 receptor type 1 (576 aa).

Residues 1–19 (MENMKVLLGFICLIVPLLS) form the signal peptide. Ig-like C2-type domains lie at 20–115 (LETD…ITMS), 121–217 (PGLC…RVIT), and 229–331 (PVIM…VRLV). The Extracellular segment spans residues 20–338 (LETDKCTEYP…RLVYPVPDFK (319 aa)). 3 disulfides stabilise this stretch: Cys25-Cys107, Cys46-Cys99, and Cys145-Cys199. 2 N-linked (GlcNAc...) asparagine glycosylation sites follow: Asn63 and Asn103. 3 N-linked (GlcNAc...) asparagine glycosylation sites follow: Asn236, Asn252, and Asn266. Cys251 and Cys315 are oxidised to a cystine. Residues 339-359 (NYLIGGFAIFTATAVFCACIY) form a helical membrane-spanning segment. Over 360–576 (KVFKVDIVLW…LQAETHLPLG (217 aa)) the chain is Cytoplasmic. The TIR domain occupies 386-541 (RTYDAYVLYP…RFWKNLRYQM (156 aa)). Residue Glu473 is part of the active site. Tyr499 bears the Phosphotyrosine mark. A Phosphothreonine; by PKC modification is found at Thr556.

The protein belongs to the interleukin-1 receptor family. In terms of assembly, the interleukin-1 receptor complex is a heterodimer of IL1R1 and IL1RAP. Interacts with PIK3R1. Interacts with IL1A. A soluble form (sIL1R1) is probably produced by proteolytic cleavage at the cell surface (shedding). Post-translationally, rapidly phosphorylated on Tyr-499 in response to IL-1, which creates a SH2 binding site for the PI 3-kinase regulatory subunit PIK3R1.

Its subcellular location is the membrane. The protein localises to the cell membrane. The protein resides in the secreted. The enzyme catalyses NAD(+) + H2O = ADP-D-ribose + nicotinamide + H(+). Receptor for IL1A, IL1B and IL1RN. After binding to interleukin-1 associates with the coreceptor IL1RAP to form the high affinity interleukin-1 receptor complex which mediates interleukin-1-dependent activation of NF-kappa-B, MAPK and other pathways. Signaling involves the recruitment of adapter molecules such as TOLLIP, MYD88, and IRAK1 or IRAK2 via the respective TIR domains of the receptor/coreceptor subunits. Binds ligands with comparable affinity and binding of antagonist IL1RN prevents association with IL1RAP to form a signaling complex. Involved in IL1B-mediated costimulation of IFNG production from T-helper 1 (Th1) cells. This chain is Interleukin-1 receptor type 1 (Il1r1), found in Rattus norvegicus (Rat).